The chain runs to 226 residues: uncharacterized protein (226 aa).

This sequence belongs to the HisA/HisF family.

This is an uncharacterized protein from Methanocaldococcus jannaschii (strain ATCC 43067 / DSM 2661 / JAL-1 / JCM 10045 / NBRC 100440) (Methanococcus jannaschii).